A 355-amino-acid polypeptide reads, in one-letter code: Inositol polyphosphate multikinase (355 aa).

The residue at position 1 (M1) is an N-acetylmethionine. ATP is bound at residue K31. S97 carries the post-translational modification Phosphoserine. Residues 118–120 (ENL) and D131 contribute to the ATP site. 127–135 (PNILDIKLG) contacts substrate. 2 residues coordinate Ca(2+): E271 and N274. Residues 284 to 304 (FIDDDDDDDDNDDDDDDDAEG) are compositionally biased toward acidic residues. The interval 284 to 317 (FIDDDDDDDDNDDDDDDDAEGSSEGPKDKKTTGS) is disordered. D325 provides a ligand contact to ATP. G334 is a binding site for Ca(2+).

Belongs to the inositol phosphokinase (IPK) family. Interacts with ARG80 and MCM1. Ca(2+) serves as cofactor.

The protein localises to the nucleus. The enzyme catalyses 1D-myo-inositol 1,4,5-trisphosphate + 2 ATP = 1D-myo-inositol 1,3,4,5,6-pentakisphosphate + 2 ADP + 2 H(+). It carries out the reaction 1D-myo-inositol 1,4,5-trisphosphate + ATP = 1D-myo-inositol 1,4,5,6-tetrakisphosphate + ADP + H(+). It catalyses the reaction 1D-myo-inositol 1,4,5-trisphosphate + ATP = 1D-myo-inositol 1,3,4,5-tetrakisphosphate + ADP + H(+). The catalysed reaction is 1D-myo-inositol 1,4,5,6-tetrakisphosphate + ATP = 1D-myo-inositol 1,3,4,5,6-pentakisphosphate + ADP + H(+). The enzyme catalyses a 1,2-diacyl-sn-glycero-3-phospho-(1D-myo-inositol-4,5-bisphosphate) + ATP = a 1,2-diacyl-sn-glycero-3-phospho-(1D-myo-inositol-3,4,5-trisphosphate) + ADP + H(+). In terms of biological role, inositol phosphate kinase with both monophosphoinositol and diphosphoinositol polyphosphate synthase activities. Able to phosphorylate inositol 1,4,5-trisphosphate (Ins(1,4,5)P3) on both the carbon-3 and carbon-6 positions to synthesize inositol 1,3,4,5-tetrakisphosphate (Ins(1,3,4,5)P4) and inositol 1,4,5,6-tetrakisphosphate (Ins(1,4,5,6)P4), and then to subsequently phosphorylate and convert either isomer of InsP4 to inositol 1,3,4,5,6-pentakisphosphate (Ins(1,3,4,5,6)P5). Its predominant in vivo catalytic function is to convert Ins(1,4,5)P3 to Ins(1,4,5,6)P4 to Ins(1,3,4,5,6)P5 via 6- and 3-kinase activities. It can also use Ins(1,3,4,5,6)P5 as a substrate and act as a diphosphoinositol polyphosphate synthase to generate two different isomers of PP-InsP4. Also has a role in transcription regulation. Forms a complex with ARG80, ARG81 and MCM1 (ArgR-MCM1), which coordinates the expression of arginine anabolic and catabolic genes in response to arginine. Recruits ARG80 and MCM21 to stabilize them. Neither the kinase activity nor inositol phosphates are required for the formation of ArgR-MCM1 transcriptional complexes on DNA promoter elements and the control of arginine metabolism. In contrast, only the catalytic activity is required for PHO gene repression by phosphate and for NCR gene activation in response to nitrogen availability, indicating a role for inositol pyrophosphates in these controls. Inositol polyphosphates may be involved in the regulation of chromatin remodeling of transcription. Regulates nuclear mRNA export via inositol phosphate metabolism. Also has lipid kinase activity, transforming the lipid inositol phosphatidylinositol 4,5-bisphosphate (PI(4,5)P2) into phosphatidylinositol 3,4,5-trisphosphate (PI(3,4,5)P3) in the nucleus. Its kinase activity is necessary for the propagation of most [PSI+] prion variants. This is Inositol polyphosphate multikinase (ARG82) from Saccharomyces cerevisiae (strain ATCC 204508 / S288c) (Baker's yeast).